Reading from the N-terminus, the 206-residue chain is AT-hook motif nuclear-localized protein 28 (206 aa).

Disordered regions lie at residues methionine 1 to proline 21 and threonine 160 to tyrosine 206. Residues glycine 5 to lysine 17 constitute a DNA-binding region (a.T hook). Residues proline 7–proline 18 are compositionally biased toward basic residues. A PPC domain is found at aspartate 27–glutamate 173.

Its subcellular location is the nucleus. In terms of biological role, transcription factor that specifically binds AT-rich DNA sequences related to the nuclear matrix attachment regions (MARs). This Arabidopsis thaliana (Mouse-ear cress) protein is AT-hook motif nuclear-localized protein 28.